The primary structure comprises 213 residues: Large ribosomal subunit protein uL3 (213 aa).

Residue glutamine 151 is modified to N5-methylglutamine.

It belongs to the universal ribosomal protein uL3 family. As to quaternary structure, part of the 50S ribosomal subunit. Forms a cluster with proteins L14 and L19. In terms of processing, methylated by PrmB.

In terms of biological role, one of the primary rRNA binding proteins, it binds directly near the 3'-end of the 23S rRNA, where it nucleates assembly of the 50S subunit. This Rhizobium johnstonii (strain DSM 114642 / LMG 32736 / 3841) (Rhizobium leguminosarum bv. viciae) protein is Large ribosomal subunit protein uL3.